Here is a 265-residue protein sequence, read N- to C-terminus: 3-deoxy-manno-octulosonate cytidylyltransferase 2 (265 aa).

This sequence belongs to the KdsB family.

The protein resides in the cytoplasm. It catalyses the reaction 3-deoxy-alpha-D-manno-oct-2-ulosonate + CTP = CMP-3-deoxy-beta-D-manno-octulosonate + diphosphate. It functions in the pathway nucleotide-sugar biosynthesis; CMP-3-deoxy-D-manno-octulosonate biosynthesis; CMP-3-deoxy-D-manno-octulosonate from 3-deoxy-D-manno-octulosonate and CTP: step 1/1. Its pathway is bacterial outer membrane biogenesis; lipopolysaccharide biosynthesis. Its function is as follows. Activates KDO (a required 8-carbon sugar) for incorporation into bacterial lipopolysaccharide in Gram-negative bacteria. This Burkholderia lata (strain ATCC 17760 / DSM 23089 / LMG 22485 / NCIMB 9086 / R18194 / 383) protein is 3-deoxy-manno-octulosonate cytidylyltransferase 2.